Reading from the N-terminus, the 296-residue chain is 4-hydroxybenzoate octaprenyltransferase (296 aa).

The next 8 membrane-spanning stretches (helical) occupy residues 29 to 49 (IGVYLLLWPTLWAVWIAGKGA), 52 to 72 (LQTVCIFVLGVFLMRAAGCVI), 102 to 122 (ALVLFAVLVGLSFVLVLFTNA), 146 to 166 (YYPQVVLGAAFSWGMPMAFTA), 169 to 189 (GELPAAAWLLYIANLLWTVGY), 219 to 239 (VIILTLQGLALGCLMLAGARF), 241 to 261 (LGACFYIGLLAAAGCFAWEFW), and 275 to 295 (FLHNHWAGLAIFLGIVADYAV).

The protein belongs to the UbiA prenyltransferase family. It depends on Mg(2+) as a cofactor.

The protein localises to the cell inner membrane. The enzyme catalyses all-trans-octaprenyl diphosphate + 4-hydroxybenzoate = 4-hydroxy-3-(all-trans-octaprenyl)benzoate + diphosphate. The protein operates within cofactor biosynthesis; ubiquinone biosynthesis. Catalyzes the prenylation of para-hydroxybenzoate (PHB) with an all-trans polyprenyl group. Mediates the second step in the final reaction sequence of ubiquinone-8 (UQ-8) biosynthesis, which is the condensation of the polyisoprenoid side chain with PHB, generating the first membrane-bound Q intermediate 3-octaprenyl-4-hydroxybenzoate. This is 4-hydroxybenzoate octaprenyltransferase from Pseudomonas syringae pv. syringae (strain B728a).